The primary structure comprises 498 residues: ATP synthase subunit beta, chloroplastic (498 aa).

172–179 (GGAGVGKT) is an ATP binding site.

The protein belongs to the ATPase alpha/beta chains family. F-type ATPases have 2 components, CF(1) - the catalytic core - and CF(0) - the membrane proton channel. CF(1) has five subunits: alpha(3), beta(3), gamma(1), delta(1), epsilon(1). CF(0) has four main subunits: a(1), b(1), b'(1) and c(9-12).

The protein resides in the plastid. It is found in the chloroplast thylakoid membrane. The catalysed reaction is ATP + H2O + 4 H(+)(in) = ADP + phosphate + 5 H(+)(out). In terms of biological role, produces ATP from ADP in the presence of a proton gradient across the membrane. The catalytic sites are hosted primarily by the beta subunits. This chain is ATP synthase subunit beta, chloroplastic, found in Illicium oligandrum (Star anise).